A 255-amino-acid chain; its full sequence is Ribonuclease HII (255 aa).

Residues R58 to Y247 enclose the RNase H type-2 domain. A divalent metal cation contacts are provided by D64, E65, and D156.

This sequence belongs to the RNase HII family. Mn(2+) serves as cofactor. The cofactor is Mg(2+).

Its subcellular location is the cytoplasm. It catalyses the reaction Endonucleolytic cleavage to 5'-phosphomonoester.. In terms of biological role, endonuclease that specifically degrades the RNA of RNA-DNA hybrids. The polypeptide is Ribonuclease HII (Syntrophomonas wolfei subsp. wolfei (strain DSM 2245B / Goettingen)).